The following is a 316-amino-acid chain: MALQGWRFFGVSATIIIYIGGVLFLSMNNIPGSHPKRPRIERFAEFPSFHSPRFPMPSRKMTIRWCRDLKYMNRDLPNYTDYRADFYTLPSDVSASLQASPMLTALASFPGSGNTWLRYLLQQATGILTGSIYKDYGLLKTGFPAENVCNSSVLLVKTHEWGGKSWAPFAKAILLVRDPEKAIIAEFNRQSGGHIGFASPDRYKRTKGKYWQQFVSNKLKGWELMNLSWARNFTGSIKVVFYDDLVHHTERELRAILEFLQFPVDETLLRCAILRKEGIFRRKKRLLSFDPYTEAMRAQVQARKRIVYSLLGRKEH.

The chain crosses the membrane as a helical span at residues 8 to 28 (FFGVSATIIIYIGGVLFLSMN). 4 N-linked (GlcNAc...) asparagine glycosylation sites follow: Asn78, Asn150, Asn226, and Asn232.

It belongs to the WSCD family.

It localises to the membrane. This is WSCD family member GA21586 from Drosophila pseudoobscura pseudoobscura (Fruit fly).